Reading from the N-terminus, the 255-residue chain is Thiazole synthase (255 aa).

K95 acts as the Schiff-base intermediate with DXP in catalysis. Residues G156, 182–183 (AG), and 204–205 (NT) each bind 1-deoxy-D-xylulose 5-phosphate.

It belongs to the ThiG family. Homotetramer. Forms heterodimers with either ThiH or ThiS.

Its subcellular location is the cytoplasm. It carries out the reaction [ThiS sulfur-carrier protein]-C-terminal-Gly-aminoethanethioate + 2-iminoacetate + 1-deoxy-D-xylulose 5-phosphate = [ThiS sulfur-carrier protein]-C-terminal Gly-Gly + 2-[(2R,5Z)-2-carboxy-4-methylthiazol-5(2H)-ylidene]ethyl phosphate + 2 H2O + H(+). It participates in cofactor biosynthesis; thiamine diphosphate biosynthesis. Catalyzes the rearrangement of 1-deoxy-D-xylulose 5-phosphate (DXP) to produce the thiazole phosphate moiety of thiamine. Sulfur is provided by the thiocarboxylate moiety of the carrier protein ThiS. In vitro, sulfur can be provided by H(2)S. In Photorhabdus laumondii subsp. laumondii (strain DSM 15139 / CIP 105565 / TT01) (Photorhabdus luminescens subsp. laumondii), this protein is Thiazole synthase.